Consider the following 133-residue polypeptide: DNA-directed RNA polymerases I, II, and III subunit rpabc2 (133 aa).

The span at Met-1–Thr-32 shows a compositional bias: acidic residues. A disordered region spans residues Met-1 to Pro-55.

This sequence belongs to the archaeal Rpo6/eukaryotic RPB6 RNA polymerase subunit family. In terms of assembly, component of the RNA polymerase I (Pol I), RNA polymerase II (Pol II) and RNA polymerase III (Pol III) complexes consisting of at least 13, 12 and 17 subunits, respectively.

The protein resides in the nucleus. Its function is as follows. DNA-dependent RNA polymerases catalyze the transcription of DNA into RNA using the four ribonucleoside triphosphates as substrates. Common component of RNA polymerases I, II and III which synthesize ribosomal RNA precursors, mRNA precursors and many functional non-coding RNAs, and small RNAs, such as 5S rRNA and tRNAs, respectively. Pol II is the central component of the basal RNA polymerase II transcription machinery. Pols are composed of mobile elements that move relative to each other. In Pol II, RPB6 is part of the clamp element and together with parts of RPB1 and RPB2 forms a pocket to which the RPB4-RPB7 subcomplex binds. This Dictyostelium discoideum (Social amoeba) protein is DNA-directed RNA polymerases I, II, and III subunit rpabc2 (polr2f).